The following is a 341-amino-acid chain: Phosphoribosylformylglycinamidine cyclo-ligase (341 aa).

The protein belongs to the AIR synthase family.

Its subcellular location is the cytoplasm. It catalyses the reaction 2-formamido-N(1)-(5-O-phospho-beta-D-ribosyl)acetamidine + ATP = 5-amino-1-(5-phospho-beta-D-ribosyl)imidazole + ADP + phosphate + H(+). It participates in purine metabolism; IMP biosynthesis via de novo pathway; 5-amino-1-(5-phospho-D-ribosyl)imidazole from N(2)-formyl-N(1)-(5-phospho-D-ribosyl)glycinamide: step 2/2. The polypeptide is Phosphoribosylformylglycinamidine cyclo-ligase (Xanthomonas euvesicatoria pv. vesicatoria (strain 85-10) (Xanthomonas campestris pv. vesicatoria)).